Here is a 717-residue protein sequence, read N- to C-terminus: MAARGRLVVARGNRSFSSIIRKYSLKRETNKKVIKNVIKLLTMVILMGTVVIWIMMPTSTYKKIWLKSMRAKLGKSIYFGKPGVNLLVYMFPMILLASLGSIYLHLKKQTRVNQFNSRMDRKKIDKFGALKRPMLVKAGLGIVTVTEVMFLMMFMALLLWSLANYFYHTFVTITPQSLPTDGDNLWQARLDSIAVRLGLTGNICLGFLFYPVARGSSLLAAVGLTSESSTKYHIWLGNLVMTLFTSHGLCYCIYWISTNQVSQMLEWDRTGISHLAGEIALVAGLLMWATTFPAIRRRFFEVFFYTHYLYMVFMLFFVFHVGISYALISFPGFYIFMVDRFLRFLQSRNNVKLVSARVLPCETVELNFSKNPMLMYSPTSILFVNIPSISKLQWHPFTITSSSKLEPKKLSVMIKSQGKWSSKLHHMLASSNQIDHLAVSVEGPYGPASTDYLRHDSLVMVSGGSGITPFISIIRDLLYVSSTNAYKTPKITLICAFKNSSDLSMLNLILPNSTEISSFIDIQIKAFVTREKVSTCNMNIIKTLSFKPYVSDQPISPILGPNSWLWLATILSSSFMIFIIIIAIISRYHIYPIDQSSKEYTSAYTSLIYLLAISISVVATSTVAMLCNKKSYFKGLYQNVDALSPLMIESSPDQLLPEFTNIHYGERPNLNKLLVGLKGSSVGVLVCGPRKMREEVAKICSFGSAANLQFESISFNW.

A mitochondrion-targeting transit peptide spans 1–23; that stretch reads MAARGRLVVARGNRSFSSIIRKY. 6 helical membrane passes run 40 to 59, 86 to 104, 140 to 163, 232 to 255, 306 to 330, and 353 to 373; these read LLTM…MPTS, LLVY…SIYL, LGIV…WSLA, YHIW…CIYW, THYL…LISF, and LVSA…KNPM. The Ferric oxidoreductase domain occupies 198–317; the sequence is GLTGNICLGF…YLYMVFMLFF (120 aa). Heme-binding residues include histidine 233, histidine 247, histidine 307, and histidine 320. One can recognise an FAD-binding FR-type domain in the interval 346–451; it reads QSRNNVKLVS…EGPYGPASTD (106 aa). 395 to 398 provides a ligand contact to FAD; that stretch reads HPFT. 443–446 serves as a coordination point for NAD(+); the sequence is GPYG. The next 2 membrane-spanning stretches (helical) occupy residues 564-586 and 606-627; these read WLWL…AIIS and SLIY…AMLC.

This sequence belongs to the ferric reductase (FRE) family. Requires FAD as cofactor. Expressed in root steele. Detected in shoots, leaves, stems, siliques, flowers and cotyledons.

Its subcellular location is the mitochondrion membrane. The enzyme catalyses 2 a Fe(II)-siderophore + NAD(+) + H(+) = 2 a Fe(III)-siderophore + NADH. Functionally, ferric chelate reductase involved in iron reduction in roots. May participate in the transport of electrons to a Fe(3+) ion via FAD and heme intermediates. This Arabidopsis thaliana (Mouse-ear cress) protein is Ferric reduction oxidase 3, mitochondrial (FRO3).